The following is an 839-amino-acid chain: Enhancer of polycomb-like protein 1 (839 aa).

Disordered regions lie at residues 350–379, 393–415, 608–640, and 679–839; these read QKKR…AGSA, GSGS…PSKI, LADR…ISSD, and QQQQ…KVDA. Residues 608–620 show a composition bias toward basic and acidic residues; that stretch reads LADRQKYDRETEP. Positions 621–640 are enriched in polar residues; that stretch reads TRQMSSYDKDPSQLNGISSD. Residues 679–690 are compositionally biased toward low complexity; sequence QQQQQQMRNRQQ. Gly residues predominate over residues 697–713; sequence PGAGLGGGQGAGGGAGG. A compositionally biased stretch (polar residues) spans 714–730; the sequence is SRNNSPAPGTNGPQSKM. Low complexity predominate over residues 747-786; that stretch reads QHQQYQQMQQQQQQQQQQQQQRKMGVAPMNAASAAAAMAA. A compositionally biased stretch (basic and acidic residues) spans 828–839; that stretch reads MKQKSELAKVDA.

This sequence belongs to the enhancer of polycomb family. As to quaternary structure, component of the NuA4 histone acetyltransferase complex.

The protein localises to the nucleus. Component of the NuA4 histone acetyltransferase complex which is involved in transcriptional activation of selected genes principally by acetylation of nucleosomal histone H4 and H2A. The NuA4 complex is also involved in DNA repair. Involved in gene silencing by neighboring heterochromatin, blockage of the silencing spreading along the chromosome, and required for cell cycle progression through G2/M. This chain is Enhancer of polycomb-like protein 1 (EPL1), found in Yarrowia lipolytica (strain CLIB 122 / E 150) (Yeast).